The primary structure comprises 149 residues: Nucleoside diphosphate kinase 1 (149 aa).

Met-1 carries the N-acetylmethionine modification. 6 residues coordinate ATP: Lys-9, Phe-57, Arg-85, Thr-91, Arg-102, and Asn-112. Catalysis depends on His-115, which acts as the Pros-phosphohistidine intermediate.

The protein belongs to the NDK family. In terms of assembly, interacts with CAT1, CAT2 and CAT3. Mg(2+) is required as a cofactor.

The protein localises to the peroxisome. It localises to the nucleus. It is found in the cytoplasm. It catalyses the reaction a 2'-deoxyribonucleoside 5'-diphosphate + ATP = a 2'-deoxyribonucleoside 5'-triphosphate + ADP. The catalysed reaction is a ribonucleoside 5'-diphosphate + ATP = a ribonucleoside 5'-triphosphate + ADP. Functionally, major role in the synthesis of nucleoside triphosphates other than ATP. The ATP gamma phosphate is transferred to the NDP beta phosphate via a ping-pong mechanism, using a phosphorylated active-site intermediate. Plays a role in response to reactive oxygen species (ROS) stress. This is Nucleoside diphosphate kinase 1 (NDK1) from Arabidopsis thaliana (Mouse-ear cress).